The sequence spans 199 residues: Recombination protein RecR (199 aa).

The C4-type zinc finger occupies 57-72 (CSICGNITEDDPCDIC). The 97-residue stretch at 80–176 (KAVLVVEDSK…KVTRLAHGLS (97 aa)) folds into the Toprim domain.

Belongs to the RecR family.

In terms of biological role, may play a role in DNA repair. It seems to be involved in an RecBC-independent recombinational process of DNA repair. It may act with RecF and RecO. The sequence is that of Recombination protein RecR from Pediococcus pentosaceus (strain ATCC 25745 / CCUG 21536 / LMG 10740 / 183-1w).